The following is a 206-amino-acid chain: Protein GrpE (206 aa).

It belongs to the GrpE family. As to quaternary structure, homodimer.

Its subcellular location is the cytoplasm. Its function is as follows. Participates actively in the response to hyperosmotic and heat shock by preventing the aggregation of stress-denatured proteins, in association with DnaK and GrpE. It is the nucleotide exchange factor for DnaK and may function as a thermosensor. Unfolded proteins bind initially to DnaJ; upon interaction with the DnaJ-bound protein, DnaK hydrolyzes its bound ATP, resulting in the formation of a stable complex. GrpE releases ADP from DnaK; ATP binding to DnaK triggers the release of the substrate protein, thus completing the reaction cycle. Several rounds of ATP-dependent interactions between DnaJ, DnaK and GrpE are required for fully efficient folding. This is Protein GrpE from Shewanella baltica (strain OS223).